A 274-amino-acid polypeptide reads, in one-letter code: Large ribosomal subunit protein uL2cz/uL2cy (274 aa).

Residues 225–274 are disordered; that stretch reads PVDHPHGGGEGRAPIGRKKPVTPWGYPALGRRTRKRKKYSETLILRRRSK.

This sequence belongs to the universal ribosomal protein uL2 family. As to quaternary structure, part of the 50S ribosomal subunit.

The protein localises to the plastid. Its subcellular location is the chloroplast. This is Large ribosomal subunit protein uL2cz/uL2cy (rpl2-A) from Crucihimalaya wallichii (Rock-cress).